The chain runs to 375 residues: Period circadian protein (375 aa).

3 disordered regions span residues 27 to 119, 140 to 189, and 219 to 255; these read VTAP…VPPV, KHRE…WEGE, and KCQASGAGGGGSGSVGGTGNIGSGGSNAQPSTNQYTQ. Residues 69–91 show a composition bias toward low complexity; the sequence is SGNFTTGSNLHMSSVTNTSNAGT. The segment covering 92–113 has biased composition (gly residues); the sequence is GTSGTGNSGGGGGGGGGAGPGN. Over residues 145-156 the composition is skewed to basic and acidic residues; the sequence is RGRSGEKNKKSA. Gly residues predominate over residues 224–243; it reads GAGGGGSGSVGGTGNIGSGG. The span at 245-255 shows a compositional bias: polar residues; sequence NAQPSTNQYTQ.

Forms a heterodimer with timeless (TIM); the complex then translocates into the nucleus. Phosphorylated with a circadian rhythmicity, probably by the double-time protein (dbt). Phosphorylation could be implicated in the stability of per monomer and in the formation of heterodimer per-tim.

The protein resides in the nucleus. It is found in the cytoplasm. It localises to the perinuclear region. In terms of biological role, essential for biological clock functions. Determines the period length of circadian and ultradian rhythms; an increase in PER dosage leads to shortened circadian rhythms and a decrease leads to lengthened circadian rhythms. Essential for the circadian rhythmicity of locomotor activity, eclosion behavior, and for the rhythmic component of the male courtship song that originates in the thoracic nervous system. The biological cycle depends on the rhythmic formation and nuclear localization of the TIM-PER complex. Light induces the degradation of TIM, which promotes elimination of PER. Nuclear activity of the heterodimer coordinatively regulates PER and TIM transcription through a negative feedback loop. Behaves as a negative element in circadian transcriptional loop. Does not appear to bind DNA, suggesting indirect transcriptional inhibition. The protein is Period circadian protein (per) of Drosophila sucinea (Fruit fly).